The following is a 258-amino-acid chain: Cell division protein FtsQ (258 aa).

Topologically, residues 1 to 29 (MAKNAPAPRGARRKPVKKVGVPLRERVAT) are cytoplasmic. Residues 30–50 (AVPWMLVGSVAMVSLLAVIYL) traverse the membrane as a helical segment. At 51 to 258 (PAALDGYPIR…MAVTWREQQS (208 aa)) the chain is on the periplasmic side. One can recognise a POTRA domain in the interval 57–127 (YPIRKVGVDG…DTVVLTVEER (71 aa)).

It belongs to the FtsQ/DivIB family. FtsQ subfamily. As to quaternary structure, part of a complex composed of FtsB, FtsL and FtsQ.

It localises to the cell inner membrane. In terms of biological role, essential cell division protein. May link together the upstream cell division proteins, which are predominantly cytoplasmic, with the downstream cell division proteins, which are predominantly periplasmic. May control correct divisome assembly. The sequence is that of Cell division protein FtsQ from Alcanivorax borkumensis (strain ATCC 700651 / DSM 11573 / NCIMB 13689 / SK2).